A 312-amino-acid polypeptide reads, in one-letter code: tRNA dimethylallyltransferase (312 aa).

Gly12 to Ser19 contributes to the ATP binding site. A substrate-binding site is contributed by Thr14 to Ser19. Interaction with substrate tRNA regions lie at residues Asp38–Leu41 and Gln162–Arg166.

Belongs to the IPP transferase family. In terms of assembly, monomer. Requires Mg(2+) as cofactor.

It catalyses the reaction adenosine(37) in tRNA + dimethylallyl diphosphate = N(6)-dimethylallyladenosine(37) in tRNA + diphosphate. Catalyzes the transfer of a dimethylallyl group onto the adenine at position 37 in tRNAs that read codons beginning with uridine, leading to the formation of N6-(dimethylallyl)adenosine (i(6)A). The chain is tRNA dimethylallyltransferase from Buchnera aphidicola subsp. Cinara cedri (strain Cc).